The chain runs to 314 residues: tRNA-cytidine(32) 2-sulfurtransferase (314 aa).

The PP-loop motif signature appears at 49–54 (SGGKDS). Positions 124, 127, and 215 each coordinate [4Fe-4S] cluster.

The protein belongs to the TtcA family. Homodimer. Mg(2+) is required as a cofactor. It depends on [4Fe-4S] cluster as a cofactor.

Its subcellular location is the cytoplasm. The catalysed reaction is cytidine(32) in tRNA + S-sulfanyl-L-cysteinyl-[cysteine desulfurase] + AH2 + ATP = 2-thiocytidine(32) in tRNA + L-cysteinyl-[cysteine desulfurase] + A + AMP + diphosphate + H(+). Its pathway is tRNA modification. Functionally, catalyzes the ATP-dependent 2-thiolation of cytidine in position 32 of tRNA, to form 2-thiocytidine (s(2)C32). The sulfur atoms are provided by the cysteine/cysteine desulfurase (IscS) system. The sequence is that of tRNA-cytidine(32) 2-sulfurtransferase from Pasteurella multocida (strain Pm70).